A 144-amino-acid polypeptide reads, in one-letter code: UPF0292 protein MA_4098 (144 aa).

Residues 28 to 109 (GAVIIVEGKR…KPELQIRNKL (82 aa)) enclose the Toprim domain. Mg(2+)-binding residues include glutamate 34, aspartate 78, and aspartate 80.

It belongs to the UPF0292 family. It depends on Mg(2+) as a cofactor.

In Methanosarcina acetivorans (strain ATCC 35395 / DSM 2834 / JCM 12185 / C2A), this protein is UPF0292 protein MA_4098.